Here is a 2095-residue protein sequence, read N- to C-terminus: Oxygen-regulated protein 1 (2095 aa).

2 consecutive Doublecortin domains span residues 35 to 117 and 157 to 236; these read KRIS…VDLD and RRLV…GNYD. Disordered regions lie at residues 358-379, 643-688, 863-887, 1400-1430, and 1572-1595; these read GLSN…DYGP, ENRK…GKIP, GAEV…PDFP, NKKK…SSER, and SGYP…EPTR. Over residues 1405–1419 the composition is skewed to basic and acidic residues; that stretch reads ISSDKEESRTSEEPR. A compositionally biased stretch (polar residues) spans 1420–1430; it reads SITNSMTSSER. The segment covering 1583 to 1595 has biased composition (basic and acidic residues); it reads HNDDSGQEKEPTR.

Interacts (via the doublecortin domains) with microtubules. Interacts with RP1L1. Interacts with MAK. Expressed in the cell bodies and inner segments of photoreceptors. Not found in liver, spleen, kidney, brain, thymus, muscle, heart, lung and testis.

It localises to the cytoplasm. It is found in the cytoskeleton. Its subcellular location is the cilium axoneme. The protein localises to the cell projection. The protein resides in the cilium. It localises to the photoreceptor outer segment. In terms of biological role, microtubule-associated protein regulating the stability and length of the microtubule-based axoneme of photoreceptors. Required for the differentiation of photoreceptor cells, it plays a role in the organization of the outer segment of rod and cone photoreceptors ensuring the correct orientation and higher-order stacking of outer segment disks along the photoreceptor axoneme. This chain is Oxygen-regulated protein 1 (Rp1), found in Mus musculus (Mouse).